The chain runs to 1756 residues: Transposon Ty1-PR2 Gag-Pol polyprotein (1756 aa).

Polar residues-rich tracts occupy residues 1-10 (MESQQLSNYP), 48-60 (TKANSQQTTTPAS), and 127-152 (QSQFPQYPSSVGTPLSTPSPESGNTF). Disordered stretches follow at residues 1–93 (MESQ…MMTQ), 126–173 (PQSQ…RPPP), and 352–421 (GSRN…SKST). A compositionally biased stretch (low complexity) spans 153–165 (TDSSSADSDMTST). An RNA-binding region spans residues 299–401 (NNGIHINNKV…NSKSKTARAH (103 aa)). Positions 402–418 (NVSTSNNSPSTDNDSIS) are enriched in low complexity. Catalysis depends on Asp-461, which acts as the For protease activity; shared with dimeric partner. Residues 583-640 (NVHTSESTRKYPYPFIHRMLAHANAQTIRYSLKNNTITYFNESDVDWSSAIDYQCPDC) form an integrase-type zinc finger-like region. Residues 660-836 (NSYEPFQYLH…AGLDISTLLP (177 aa)) enclose the Integrase catalytic domain. Mg(2+)-binding residues include Asp-671 and Asp-736. Disordered regions lie at residues 957 to 1088 (SKAV…ETEK), 1093 to 1112 (RSPSIDASPPENNSSHNIVP), and 1131 to 1188 (DLPL…DNET). Residues 961–970 (SPTDSTPPST) are compositionally biased toward low complexity. Residues 1006 to 1016 (STPQISNIEST) show a composition bias toward polar residues. A compositionally biased stretch (basic and acidic residues) spans 1039–1054 (ESSHASKSKDFRHSDS). Polar residues-rich tracts occupy residues 1055 to 1083 (YSENETNHTNVPISSTGGTNNKTVPQISD) and 1102 to 1112 (PENNSSHNIVP). The Bipartite nuclear localization signal signature appears at 1179-1213 (KKRSLEDNETEIKVSRDTWNTKNMRSLEPPRSKKR). The Reverse transcriptase Ty1/copia-type domain occupies 1339 to 1477 (NNYYITQLDI…DILGLEIKYQ (139 aa)). Mg(2+) contacts are provided by Asp-1347, Asp-1428, Asp-1429, Asp-1611, Glu-1653, and Asp-1686. The region spanning 1611–1753 (DASYGNQPYY…IKTFKLLTNK (143 aa)) is the RNase H Ty1/copia-type domain.

As to quaternary structure, the capsid protein forms a homotrimer, from which the VLPs are assembled. The protease is a homodimer, whose active site consists of two apposed aspartic acid residues. Initially, virus-like particles (VLPs) are composed of the structural unprocessed proteins Gag and Gag-Pol, and also contain the host initiator methionine tRNA (tRNA(i)-Met) which serves as a primer for minus-strand DNA synthesis, and a dimer of genomic Ty RNA. Processing of the polyproteins occurs within the particle and proceeds by an ordered pathway, called maturation. First, the protease (PR) is released by autocatalytic cleavage of the Gag-Pol polyprotein yielding capsid protein p45 and a Pol-p154 precursor protein. This cleavage is a prerequisite for subsequent processing of Pol-p154 at the remaining sites to release the mature structural and catalytic proteins. Maturation takes place prior to the RT reaction and is required to produce transposition-competent VLPs.

The protein localises to the cytoplasm. It is found in the nucleus. The enzyme catalyses DNA(n) + a 2'-deoxyribonucleoside 5'-triphosphate = DNA(n+1) + diphosphate. The catalysed reaction is Endonucleolytic cleavage to 5'-phosphomonoester.. Capsid protein (CA) is the structural component of the virus-like particle (VLP), forming the shell that encapsulates the retrotransposons dimeric RNA genome. The particles are assembled from trimer-clustered units and there are holes in the capsid shells that allow for the diffusion of macromolecules. CA also has nucleocapsid-like chaperone activity, promoting primer tRNA(i)-Met annealing to the multipartite primer-binding site (PBS), dimerization of Ty1 RNA and initiation of reverse transcription. In terms of biological role, the aspartyl protease (PR) mediates the proteolytic cleavages of the Gag and Gag-Pol polyproteins after assembly of the VLP. Its function is as follows. Reverse transcriptase/ribonuclease H (RT) is a multifunctional enzyme that catalyzes the conversion of the retro-elements RNA genome into dsDNA within the VLP. The enzyme displays a DNA polymerase activity that can copy either DNA or RNA templates, and a ribonuclease H (RNase H) activity that cleaves the RNA strand of RNA-DNA heteroduplexes during plus-strand synthesis and hydrolyzes RNA primers. The conversion leads to a linear dsDNA copy of the retrotransposon that includes long terminal repeats (LTRs) at both ends. Functionally, integrase (IN) targets the VLP to the nucleus, where a subparticle preintegration complex (PIC) containing at least integrase and the newly synthesized dsDNA copy of the retrotransposon must transit the nuclear membrane. Once in the nucleus, integrase performs the integration of the dsDNA into the host genome. In Saccharomyces cerevisiae (strain ATCC 204508 / S288c) (Baker's yeast), this protein is Transposon Ty1-PR2 Gag-Pol polyprotein (TY1B-PR2).